The following is a 217-amino-acid chain: Lipoprotein CseA (217 aa).

Residues 1–34 form the signal peptide; that stretch reads MRGLGTESLRARGALKAAIAAVAGLAVLGLSVSA. A lipid anchor (N-palmitoyl cysteine) is attached at Cys35. Cys35 is lipidated: S-diacylglycerol cysteine. Disordered stretches follow at residues 39 to 66 and 192 to 217; these read GTGARDEGPAGSDSVAAGAATPTVSPSK and FSEESRTHTEYSNAVGGTDSATPAPN.

It localises to the cell membrane. In terms of biological role, may be involved in the stabilization of the cell envelope or may interact with the sensor protein CseC to modulate its activity, in response to cell envelope stress. The polypeptide is Lipoprotein CseA (cseA) (Streptomyces avermitilis (strain ATCC 31267 / DSM 46492 / JCM 5070 / NBRC 14893 / NCIMB 12804 / NRRL 8165 / MA-4680)).